A 155-amino-acid chain; its full sequence is Ribosomal RNA large subunit methyltransferase H (155 aa).

S-adenosyl-L-methionine is bound by residues G104 and 123–128 (LGPMTF).

It belongs to the RNA methyltransferase RlmH family. As to quaternary structure, homodimer.

The protein localises to the cytoplasm. The enzyme catalyses pseudouridine(1915) in 23S rRNA + S-adenosyl-L-methionine = N(3)-methylpseudouridine(1915) in 23S rRNA + S-adenosyl-L-homocysteine + H(+). In terms of biological role, specifically methylates the pseudouridine at position 1915 (m3Psi1915) in 23S rRNA. The chain is Ribosomal RNA large subunit methyltransferase H from Nitratidesulfovibrio vulgaris (strain DSM 19637 / Miyazaki F) (Desulfovibrio vulgaris).